We begin with the raw amino-acid sequence, 683 residues long: Transforming growth factor-beta-induced protein ig-h3 (683 aa).

Positions 1-23 (MALLMRLLTLALALSVGPAGTLA) are cleaved as a signal peptide. Ser37 carries the post-translational modification Phosphoserine. Residues 45-99 (GPNVCAVQKVIGTNKKYFTNCKQWYQRKICGKSTVISYECCPGYEKVPGEKGCPA) enclose the EMI domain. 5 disulfides stabilise this stretch: Cys49-Cys85, Cys74-Cys339, Cys84-Cys97, Cys214-Cys317, and Cys473-Cys478. S-cysteinyl cysteine is present on Cys65. FAS1 domains are found at residues 103 to 236 (LSNL…DKVI), 240 to 371 (TNNI…DELL), 375 to 498 (SAKT…DRML), and 502 to 632 (MGTV…NTVL). Residues 642–644 (RGD) carry the Cell attachment site motif.

Binds to type I, II, and IV collagens. In terms of processing, gamma-carboxylation is controversial. Gamma-carboxyglutamated; gamma-carboxyglutamate residues are formed by vitamin K dependent carboxylation; this may be required for calcium binding. According to a more recent report, does not contain vitamin K-dependent gamma-carboxyglutamate residues. Post-translationally, the EMI domain contains 2 expected intradomain disulfide bridges (Cys-49-Cys85 and Cys-84-Cys-97) and one unusual interdomain disulfide bridge to the second FAS1 domain (Cys-74-Cys-339). This arrangement violates the predicted disulfide bridge pattern of an EMI domain. Expressed in heart, kidney, liver, skeletal muscle, testis, thyroid and uterus.

It is found in the secreted. Its subcellular location is the extracellular space. The protein resides in the extracellular matrix. Plays a role in cell adhesion. May play a role in cell-collagen interactions. The polypeptide is Transforming growth factor-beta-induced protein ig-h3 (Tgfbi) (Mus musculus (Mouse)).